Here is a 464-residue protein sequence, read N- to C-terminus: Cystathionine beta-lyase, chloroplastic (464 aa).

The N-terminal 55 residues, 1 to 55, are a transit peptide targeting the chloroplast; sequence MTSSLSLHSSFVPSFADLSDRGLISKNSPTSVSISKVPTWEKKQISNRNSFKLNC. Residues Y127, R129, G157, M158, S275, and T277 each coordinate pyridoxal 5'-phosphate. At K278 the chain carries N6-(pyridoxal phosphate)lysine.

Belongs to the trans-sulfuration enzymes family. In terms of assembly, forms homodimers. May form homotetramers from two homodimers. It depends on pyridoxal 5'-phosphate as a cofactor.

Its subcellular location is the plastid. It is found in the chloroplast. It carries out the reaction L,L-cystathionine + H2O = L-homocysteine + pyruvate + NH4(+). It catalyses the reaction an S-substituted L-cysteine + H2O = a thiol + pyruvate + NH4(+). Its pathway is amino-acid biosynthesis; L-methionine biosynthesis via de novo pathway; L-homocysteine from L-cystathionine: step 1/1. In terms of biological role, catalyzes the penultimate step in the de novo biosynthesis of methionine. Its role in methionine metabolism may affect plant development in different organs, probably by modifying plant auxin transport. Its cysteine desulfhydrase activity may be involved in hydrogen sulfur production using L-cysteine as a substrate. In Arabidopsis thaliana (Mouse-ear cress), this protein is Cystathionine beta-lyase, chloroplastic.